Consider the following 303-residue polypeptide: 4-diphosphocytidyl-2-C-methyl-D-erythritol kinase (303 aa).

Residue K21 is part of the active site. Position 106 to 116 (106 to 116 (PVAAGIGGGSA)) interacts with ATP. D148 is a catalytic residue.

It belongs to the GHMP kinase family. IspE subfamily.

The enzyme catalyses 4-CDP-2-C-methyl-D-erythritol + ATP = 4-CDP-2-C-methyl-D-erythritol 2-phosphate + ADP + H(+). It participates in isoprenoid biosynthesis; isopentenyl diphosphate biosynthesis via DXP pathway; isopentenyl diphosphate from 1-deoxy-D-xylulose 5-phosphate: step 3/6. In terms of biological role, catalyzes the phosphorylation of the position 2 hydroxy group of 4-diphosphocytidyl-2C-methyl-D-erythritol. In Nitrobacter hamburgensis (strain DSM 10229 / NCIMB 13809 / X14), this protein is 4-diphosphocytidyl-2-C-methyl-D-erythritol kinase.